Reading from the N-terminus, the 552-residue chain is Glutamine--tRNA ligase (552 aa).

The 'HIGH' region signature appears at 34–44; it reads PEPNGYLHIGH. ATP-binding positions include 35–37 and 41–47; these read EPN and HIGHAKS. Residues Asp67 and Tyr212 each contribute to the L-glutamine site. ATP is bound by residues Thr231, 261 to 262, and 269 to 271; these read RL and MSK. The 'KMSKS' region signature appears at 268–272; that stretch reads IMSKR.

This sequence belongs to the class-I aminoacyl-tRNA synthetase family. In terms of assembly, monomer.

It is found in the cytoplasm. The catalysed reaction is tRNA(Gln) + L-glutamine + ATP = L-glutaminyl-tRNA(Gln) + AMP + diphosphate. The sequence is that of Glutamine--tRNA ligase from Pectobacterium atrosepticum (strain SCRI 1043 / ATCC BAA-672) (Erwinia carotovora subsp. atroseptica).